Reading from the N-terminus, the 357-residue chain is Holliday junction branch migration complex subunit RuvB (357 aa).

Residues 4-195 are large ATPase domain (RuvB-L); that stretch reads TDKLAAKAVS…FGIVARLEFY (192 aa). Residues Leu34, Arg35, Gly76, Lys79, Thr80, Thr81, 142-144, Arg185, Tyr195, and Arg232 contribute to the ATP site; that span reads EDY. A Mg(2+)-binding site is contributed by Thr80. The tract at residues 196–266 is small ATPAse domain (RuvB-S); that stretch reads TPTELARIVT…VADAALAMLD (71 aa). The interval 269 to 357 is head domain (RuvB-H); sequence AVGFDLMDRK…PARDLWDNNA (89 aa). 3 residues coordinate DNA: Arg305, Arg324, and Arg329.

It belongs to the RuvB family. Homohexamer. Forms an RuvA(8)-RuvB(12)-Holliday junction (HJ) complex. HJ DNA is sandwiched between 2 RuvA tetramers; dsDNA enters through RuvA and exits via RuvB. An RuvB hexamer assembles on each DNA strand where it exits the tetramer. Each RuvB hexamer is contacted by two RuvA subunits (via domain III) on 2 adjacent RuvB subunits; this complex drives branch migration. In the full resolvosome a probable DNA-RuvA(4)-RuvB(12)-RuvC(2) complex forms which resolves the HJ.

It is found in the cytoplasm. It carries out the reaction ATP + H2O = ADP + phosphate + H(+). Its function is as follows. The RuvA-RuvB-RuvC complex processes Holliday junction (HJ) DNA during genetic recombination and DNA repair, while the RuvA-RuvB complex plays an important role in the rescue of blocked DNA replication forks via replication fork reversal (RFR). RuvA specifically binds to HJ cruciform DNA, conferring on it an open structure. The RuvB hexamer acts as an ATP-dependent pump, pulling dsDNA into and through the RuvAB complex. RuvB forms 2 homohexamers on either side of HJ DNA bound by 1 or 2 RuvA tetramers; 4 subunits per hexamer contact DNA at a time. Coordinated motions by a converter formed by DNA-disengaged RuvB subunits stimulates ATP hydrolysis and nucleotide exchange. Immobilization of the converter enables RuvB to convert the ATP-contained energy into a lever motion, pulling 2 nucleotides of DNA out of the RuvA tetramer per ATP hydrolyzed, thus driving DNA branch migration. The RuvB motors rotate together with the DNA substrate, which together with the progressing nucleotide cycle form the mechanistic basis for DNA recombination by continuous HJ branch migration. Branch migration allows RuvC to scan DNA until it finds its consensus sequence, where it cleaves and resolves cruciform DNA. This is Holliday junction branch migration complex subunit RuvB from Ralstonia nicotianae (strain ATCC BAA-1114 / GMI1000) (Ralstonia solanacearum).